A 102-amino-acid chain; its full sequence is uncharacterized protein (102 aa).

This is an uncharacterized protein from Acidianus filamentous virus 1 (isolate United States/Yellowstone) (AFV-1).